The chain runs to 309 residues: Olfactory receptor 8A1 (309 aa).

Over 1 to 28 (MTAENQSTVTEFILGGLTNRPELQLPLF) the chain is Extracellular. The helical transmembrane segment at 29 to 49 (LLFLGIYVVTMVGNLGMITLI) threads the bilayer. Over 50–56 (GLNSQLH) the chain is Cytoplasmic. Residues 57 to 77 (TPMYFFLSNLSLVDLCYSSVI) form a helical membrane-spanning segment. Topologically, residues 78 to 90 (TPKMLINFVSQRN) are extracellular. Residues 91-111 (LISYVGCMSQLYFFLVFVIAE) traverse the membrane as a helical segment. Cysteine 97 and cysteine 188 are joined by a disulfide. Residues 112 to 133 (CYMLTVMAYDRYVAICQPLLYN) lie on the Cytoplasmic side of the membrane. Residues 134-154 (IIMSPALCSLLVAFVYAVGLI) form a helical membrane-spanning segment. Topologically, residues 155-195 (GSAIETGLMLKLNYCEDLISHYFCDILPLMKLSCSSTYDVE) are extracellular. The helical transmembrane segment at 196–216 (MAVFFLAGFDIIVTSLTVLIS) threads the bilayer. Residues 217–238 (YAFILSSILRISSNEGRSKAFS) lie on the Cytoplasmic side of the membrane. A helical transmembrane segment spans residues 239–259 (TCSSHFAAVGLFYGSTAFMYL). The Extracellular portion of the chain corresponds to 260–270 (KPSTASSLAQE). Residues 271–291 (NVASVFYTTVIPMFNPLIYSL) form a helical membrane-spanning segment. The Cytoplasmic segment spans residues 292–309 (RNKEVKTALDKTLRRKVF).

The protein belongs to the G-protein coupled receptor 1 family.

Its subcellular location is the cell membrane. Functionally, odorant receptor. The protein is Olfactory receptor 8A1 of Mus musculus (Mouse).